Reading from the N-terminus, the 448-residue chain is Ribosome biogenesis protein YTM1 (448 aa).

The interval 5–86 (TSNQAVVFST…EETLEIEYIE (82 aa)) is ubiquitin-like (UBL) domain. 6 WD repeats span residues 98–136 (PHESWVSAVSCSLPTHFLTTAYDGHLRAFDLSKNVTLDA), 191–230 (LHTAPVSSIAANPSGTQLLTSSWDSLIGVWDTTIPPKHEV), 271–309 (SHIGRVSKVAWLSPTQGVSCGFDSTLRTWDVERGLCTRT), 312–351 (ASEKPFLDLAVNVENQTALTVSTDRTMTLYDLRTEEALSA), 357–397 (LHPA…AAIS), and 403–439 (DGTKKVLAVDWKRGVIGIGGEGGLDVWKVGLENETQG). The tract at residues 225-261 (PPKHEVPEPTITAADQRTKKRRKVDPSSGDSSSPTAI) is disordered.

The protein belongs to the WD repeat WDR12/YTM1 family. Component of the NOP7 complex, composed of ERB1, NOP7 and YTM1. The complex is held together by ERB1, which interacts with NOP7 via its N-terminal domain and with YTM1 via a high-affinity interaction between the seven-bladed beta-propeller domains of the 2 proteins. The NOP7 complex associates with the 66S pre-ribosome. Interacts (via UBL domain) with MDN1 (via VWFA/MIDAS domain).

Its subcellular location is the nucleus. The protein localises to the nucleolus. The protein resides in the nucleoplasm. In terms of biological role, component of the NOP7 complex, which is required for maturation of the 25S and 5.8S ribosomal RNAs and formation of the 60S ribosome. The polypeptide is Ribosome biogenesis protein YTM1 (Coprinopsis cinerea (strain Okayama-7 / 130 / ATCC MYA-4618 / FGSC 9003) (Inky cap fungus)).